Here is a 79-residue protein sequence, read N- to C-terminus: Large ribosomal subunit protein bL28 (79 aa).

Belongs to the bacterial ribosomal protein bL28 family.

This is Large ribosomal subunit protein bL28 from Blochmanniella floridana.